A 202-amino-acid chain; its full sequence is Casparian strip membrane protein 1 (202 aa).

The Cytoplasmic portion of the chain corresponds to 1-42; that stretch reads MEKNKSTAIEIAESSKESKGKAPLLAAAVGHDRAAGYKRGVS. Residues 43–63 form a helical membrane-spanning segment; that stretch reads IFDLFLRISAATAALAATIVM. At 64–90 the chain is on the extracellular side; sequence GTTEQTLPFFTQFFQFRAQYDDLPTFT. A helical transmembrane segment spans residues 91–111; the sequence is FFVVGMAIVTGYLILSVPFSI. The Cytoplasmic portion of the chain corresponds to 112 to 130; it reads VCIARPVAIGPRFLLIVGD. The helical transmembrane segment at 131-151 threads the bilayer; it reads TLKAVLATSAAGSSAAIVYLA. Residues 152–173 are Extracellular-facing; the sequence is HNGNSDANWLDICQQFNDFCQR. The chain crosses the membrane as a helical span at residues 174–194; the sequence is VSGAVVAAFVAVVLLIFLIVL. The Cytoplasmic portion of the chain corresponds to 195–202; it reads SAMALRKN.

Belongs to the Casparian strip membrane proteins (CASP) family. Homodimer and heterodimers.

It is found in the cell membrane. In terms of biological role, regulates membrane-cell wall junctions and localized cell wall deposition. Required for establishment of the Casparian strip membrane domain (CSD) and the subsequent formation of Casparian strips, a cell wall modification of the root endodermis that determines an apoplastic barrier between the intraorganismal apoplasm and the extraorganismal apoplasm and prevents lateral diffusion. The polypeptide is Casparian strip membrane protein 1 (Striga hermonthica (Purple witchweed)).